Here is a 207-residue protein sequence, read N- to C-terminus: Zinc finger protein JAGGED-like (207 aa).

Residues 1 to 16 (MRADENNTLDLNNLPD) show a composition bias toward low complexity. Residues 1–20 (MRADENNTLDLNNLPDDPSR) are disordered. A C2H2-type zinc finger spans residues 50–72 (YECRFCSLKFFKSQALGGHMNRH).

As to expression, expressed in the emerging leaf, stamen and carpel primordia. Not expressed in the apical shoot meristem (SAM).

Its subcellular location is the nucleus. Functionally, acts with JAG to promote growth and patterning in stamens and carpels. Promotes the growth of the abaxial and adaxial sides of floral organs. Promotes the growth of the pollen-bearing microsporangia in anthers, the carpel walls of the gynoecium and the establishment of the correct number of cell layers in carpel walls. Promotes leaf blade growth and trichome development. This is Zinc finger protein JAGGED-like (JGL) from Arabidopsis thaliana (Mouse-ear cress).